The chain runs to 600 residues: Transcription factor rlmA (600 aa).

The region spanning 1-61 is the MADS-box domain; it reads MGRRKIEIKA…KKLYEFSSCD (61 aa). Disordered regions lie at residues 71 to 518 and 544 to 600; these read YYGP…NIET and GFGR…KSKT. A compositionally biased stretch (basic and acidic residues) spans 75-89; it reads PHEHKGPEDFNGKRD. The span at 151–160 shows a compositional bias: polar residues; the sequence is PQPQGASRPS. A compositionally biased stretch (pro residues) spans 222-242; it reads QPLPPHAIPPHPMPQPVPPHH. The span at 243–260 shows a compositional bias: low complexity; sequence QAPQHLPQHPHPLAQQTP. Residues 328–339 are compositionally biased toward polar residues; that stretch reads HQRSLSSKSRSI. Residues 364–384 show a composition bias toward basic and acidic residues; it reads PRTESADVKAEAKQNDSKEIK. The span at 386–397 shows a compositional bias: pro residues; the sequence is PAQPVAPPPPPR. A compositionally biased stretch (low complexity) spans 440–452; that stretch reads RGSATADSSSSTG. The span at 453 to 468 shows a compositional bias: polar residues; sequence NQTVTPAKANPDTNHS. Pro residues predominate over residues 490 to 501; the sequence is PPNPFARPPPPG. A compositionally biased stretch (low complexity) spans 503-515; sequence ASQNSNAYNSNNN.

The protein belongs to the MEF2 family. Interacts with hsp90. Post-translationally, phosphorylation during asexual development.

It is found in the nucleus. Functionally, transcription factor; part of cell wall integrity (CWI) signaling pathway composed of pkcA, the bck1-mkk2-mpka MAPK cascade and the downstream rlmA transcription regulator. The CWI signaling pathway regulates cell wall integrity and pyomelanin formation. CWI also controls oxidative stress response, gliotoxin production, iron adaptation and asexual development. Finally, CWI is constitutively required for A.fumigatus to cope with the temperature increase found in the mammalian lung environment, during infection. Positively regulates the phosphorylation of mpkA. Involved in tolerance to oxidative damage and transcriptional regulation of genes related to oxidative stress adaptation. Directly regulates the expression of regulators of conidiation, including flbB, flbC, brlA, abaA, and rasB, as well as genes involved in cell wall synthesis and remodeling. Specifically associates with the target fumiquinazoline (fmq) cluster genes promoters at conserved motifs (5'-TAWWWWTA-3') during conidiation to supplement mature conidia with fumiquinazoline C. Also controls the DHN-melanin production via binding the promoter of pksP. The sequence is that of Transcription factor rlmA from Aspergillus fumigatus (strain ATCC MYA-4609 / CBS 101355 / FGSC A1100 / Af293) (Neosartorya fumigata).